Here is a 112-residue protein sequence, read N- to C-terminus: Small ribosomal subunit protein bS6 (112 aa).

The protein belongs to the bacterial ribosomal protein bS6 family.

Binds together with bS18 to 16S ribosomal RNA. This is Small ribosomal subunit protein bS6 (rpsF) from Chlamydia pneumoniae (Chlamydophila pneumoniae).